Here is a 294-residue protein sequence, read N- to C-terminus: 4-hydroxy-tetrahydrodipicolinate synthase (294 aa).

T45 serves as a coordination point for pyruvate. Y133 functions as the Proton donor/acceptor in the catalytic mechanism. The active-site Schiff-base intermediate with substrate is the K161. Pyruvate is bound at residue I203.

Belongs to the DapA family. Homotetramer; dimer of dimers.

The protein resides in the cytoplasm. The catalysed reaction is L-aspartate 4-semialdehyde + pyruvate = (2S,4S)-4-hydroxy-2,3,4,5-tetrahydrodipicolinate + H2O + H(+). It functions in the pathway amino-acid biosynthesis; L-lysine biosynthesis via DAP pathway; (S)-tetrahydrodipicolinate from L-aspartate: step 3/4. In terms of biological role, catalyzes the condensation of (S)-aspartate-beta-semialdehyde [(S)-ASA] and pyruvate to 4-hydroxy-tetrahydrodipicolinate (HTPA). The protein is 4-hydroxy-tetrahydrodipicolinate synthase of Shewanella sp. (strain MR-4).